We begin with the raw amino-acid sequence, 224 residues long: Deoxyribose-phosphate aldolase (224 aa).

Catalysis depends on aspartate 92, which acts as the Proton donor/acceptor. Residue lysine 154 is the Schiff-base intermediate with acetaldehyde of the active site. Lysine 183 serves as the catalytic Proton donor/acceptor.

Belongs to the DeoC/FbaB aldolase family. DeoC type 1 subfamily.

The protein localises to the cytoplasm. The enzyme catalyses 2-deoxy-D-ribose 5-phosphate = D-glyceraldehyde 3-phosphate + acetaldehyde. Its pathway is carbohydrate degradation; 2-deoxy-D-ribose 1-phosphate degradation; D-glyceraldehyde 3-phosphate and acetaldehyde from 2-deoxy-alpha-D-ribose 1-phosphate: step 2/2. Catalyzes a reversible aldol reaction between acetaldehyde and D-glyceraldehyde 3-phosphate to generate 2-deoxy-D-ribose 5-phosphate. The sequence is that of Deoxyribose-phosphate aldolase from Actinobacillus succinogenes (strain ATCC 55618 / DSM 22257 / CCUG 43843 / 130Z).